Here is a 428-residue protein sequence, read N- to C-terminus: Histidine--tRNA ligase (428 aa).

The protein belongs to the class-II aminoacyl-tRNA synthetase family. As to quaternary structure, homodimer.

The protein resides in the cytoplasm. The catalysed reaction is tRNA(His) + L-histidine + ATP = L-histidyl-tRNA(His) + AMP + diphosphate + H(+). This chain is Histidine--tRNA ligase, found in Lactobacillus helveticus (strain DPC 4571).